Consider the following 484-residue polypeptide: tRNA sulfurtransferase (484 aa).

The THUMP domain maps to 62–166 (GPVIDELVRI…DDSYHIAHRR (105 aa)). ATP is bound by residues 184–185 (LI), lysine 266, glycine 288, and glutamine 297. An intrachain disulfide couples cysteine 345 to cysteine 456. The region spanning 404–482 (PSVDDVIIDV…GHGNIKVYAP (79 aa)) is the Rhodanese domain. The active-site Cysteine persulfide intermediate is cysteine 456.

It belongs to the ThiI family.

The protein localises to the cytoplasm. The enzyme catalyses [ThiI sulfur-carrier protein]-S-sulfanyl-L-cysteine + a uridine in tRNA + 2 reduced [2Fe-2S]-[ferredoxin] + ATP + H(+) = [ThiI sulfur-carrier protein]-L-cysteine + a 4-thiouridine in tRNA + 2 oxidized [2Fe-2S]-[ferredoxin] + AMP + diphosphate. The catalysed reaction is [ThiS sulfur-carrier protein]-C-terminal Gly-Gly-AMP + S-sulfanyl-L-cysteinyl-[cysteine desulfurase] + AH2 = [ThiS sulfur-carrier protein]-C-terminal-Gly-aminoethanethioate + L-cysteinyl-[cysteine desulfurase] + A + AMP + 2 H(+). Its pathway is cofactor biosynthesis; thiamine diphosphate biosynthesis. Functionally, catalyzes the ATP-dependent transfer of a sulfur to tRNA to produce 4-thiouridine in position 8 of tRNAs, which functions as a near-UV photosensor. Also catalyzes the transfer of sulfur to the sulfur carrier protein ThiS, forming ThiS-thiocarboxylate. This is a step in the synthesis of thiazole, in the thiamine biosynthesis pathway. The sulfur is donated as persulfide by IscS. The polypeptide is tRNA sulfurtransferase (Marinobacter nauticus (strain ATCC 700491 / DSM 11845 / VT8) (Marinobacter aquaeolei)).